The sequence spans 1478 residues: FYVE and coiled-coil domain-containing protein 1 (1478 aa).

An N-acetylalanine modification is found at A2. Residues 4–33 (TNAESQLQRIIRDLQDAVTELSKEFQEAGE) adopt a coiled-coil conformation. Positions 36–169 (TDDSTSLHKF…VQFDLASRGF (134 aa)) constitute an RUN domain. The residue at position 196 (S196) is a Phosphoserine. Positions 225–280 (NNEALEGFDEMRLELDQLEVREKQLRERMQQLDRENQELRAAVSQQGEQLQTERER) form a coiled coil. Phosphoserine is present on S342. Position 381 is a phosphothreonine (T381). Coiled coils occupy residues 394-555 (SDAA…MLER) and 596-1151 (QEAQ…KDAL). A disordered region spans residues 586-613 (GKPEEEQRGLQEAQLDDTKVQEGSQEEE). S878 carries the post-translational modification Phosphoserine. Residues 1173–1231 (DTEANHCLDCKREFSWMVRRHHCRICGRIFCYYCCNNYVLSKHGGKKERCCRACFQKLS) form an FYVE-type zinc finger. Zn(2+)-binding residues include C1179, C1182, C1195, C1198, C1203, C1206, C1223, and C1226. Over residues 1231 to 1261 (SEGPGSPDSSGSGTSQGEPSPALSPASPGPQ) the composition is skewed to low complexity. Disordered regions lie at residues 1231–1277 (SEGP…PPDD) and 1294–1332 (SGSS…DMPV). Composition is skewed to polar residues over residues 1294 to 1305 (SGSSLPETPTET) and 1314 to 1324 (EQDTTSTSLTP). The GOLD domain maps to 1337–1466 (EICLLKSGEL…SKKVFYHLTV (130 aa)).

Can form homodimers. Interacts (via C-terminus) with MAP1LC3B. Interacts with RAB7A; the interaction with RAB7A induces FYCO1 recruitment to late endosomal/lysosomal compartments. Interacts with MAP1LC3B. As to expression, expressed in heart and skeletal muscle.

It is found in the cytoplasmic vesicle. The protein resides in the autophagosome. It localises to the endosome. Its subcellular location is the lysosome. May mediate microtubule plus end-directed vesicle transport. The chain is FYVE and coiled-coil domain-containing protein 1 (FYCO1) from Homo sapiens (Human).